Reading from the N-terminus, the 445-residue chain is MRPGSWRVITHYGFTGPIQRLQAPLRRSLARAAALSTRSYATIPSAPSSQPTSQESSPAASASASASAPATKPRPTYFKDTTLASLDDFIANQSSAAPLAPSEAYTLRTAQVGPAGKKRTITRLPEWLKTPIPSAGANPEFAKIKADLRGLNLHTVCEEARCPNIGECWGGSNKAAATATIMLMGDTCTRGCRFCSVKTSRKPPPLDPHEPENTAEALARWGLGYVVLTSVDRDDLADGGARHFAETIRRIKQKKPTLLVEALTGDFMGDLDMVKIVADSGLDVYAHNVETVENLTPYVRDRRATFRQSLKVLEHVKNVRGKEGIITKTSIMLGLGETEEELWDALRELRKVDVDVVTFGQYMRPTKRHLAVEKYITPDEFELWRQRALDMGFLYCASGPLVRSSYKAGEAFIENVLKKRASERVVSEALGQAVAAEEATSAKSA.

The N-terminal 40 residues, 1-40, are a transit peptide targeting the mitochondrion; the sequence is MRPGSWRVITHYGFTGPIQRLQAPLRRSLARAAALSTRSY. The segment covering 42-71 has biased composition (low complexity); the sequence is TIPSAPSSQPTSQESSPAASASASASAPAT. Positions 42–77 are disordered; the sequence is TIPSAPSSQPTSQESSPAASASASASAPATKPRPTY. [4Fe-4S] cluster-binding residues include Cys157, Cys162, Cys168, Cys188, Cys192, Cys195, and Ser405. A Radical SAM core domain is found at 171–394; the sequence is GSNKAAATAT…RQRALDMGFL (224 aa).

This sequence belongs to the radical SAM superfamily. Lipoyl synthase family. The cofactor is [4Fe-4S] cluster.

The protein resides in the mitochondrion. It catalyses the reaction [[Fe-S] cluster scaffold protein carrying a second [4Fe-4S](2+) cluster] + N(6)-octanoyl-L-lysyl-[protein] + 2 oxidized [2Fe-2S]-[ferredoxin] + 2 S-adenosyl-L-methionine + 4 H(+) = [[Fe-S] cluster scaffold protein] + N(6)-[(R)-dihydrolipoyl]-L-lysyl-[protein] + 4 Fe(3+) + 2 hydrogen sulfide + 2 5'-deoxyadenosine + 2 L-methionine + 2 reduced [2Fe-2S]-[ferredoxin]. It participates in protein modification; protein lipoylation via endogenous pathway; protein N(6)-(lipoyl)lysine from octanoyl-[acyl-carrier-protein]: step 2/2. Functionally, catalyzes the radical-mediated insertion of two sulfur atoms into the C-6 and C-8 positions of the octanoyl moiety bound to the lipoyl domains of lipoate-dependent enzymes, thereby converting the octanoylated domains into lipoylated derivatives. This is Lipoyl synthase, mitochondrial from Sordaria macrospora (strain ATCC MYA-333 / DSM 997 / K(L3346) / K-hell).